We begin with the raw amino-acid sequence, 350 residues long: Dihydroorotate dehydrogenase (quinone) (350 aa).

FMN is bound by residues 67 to 71 (AGFDK) and Gly-91. Lys-71 provides a ligand contact to substrate. Residue 116 to 120 (NRMGF) coordinates substrate. Positions 144 and 177 each coordinate FMN. Asn-177 provides a ligand contact to substrate. Ser-180 functions as the Nucleophile in the catalytic mechanism. Asn-182 provides a ligand contact to substrate. FMN contacts are provided by Lys-213 and Thr-241. 242–243 (NT) contributes to the substrate binding site. Residues 249–268 (ASLHSDAADEEGGLSGAPIT) form a disordered region. Residues Gly-264, Gly-291, and 312–313 (YT) each bind FMN.

The protein belongs to the dihydroorotate dehydrogenase family. Type 2 subfamily. In terms of assembly, monomer. Requires FMN as cofactor.

The protein resides in the cell membrane. It catalyses the reaction (S)-dihydroorotate + a quinone = orotate + a quinol. It participates in pyrimidine metabolism; UMP biosynthesis via de novo pathway; orotate from (S)-dihydroorotate (quinone route): step 1/1. Functionally, catalyzes the conversion of dihydroorotate to orotate with quinone as electron acceptor. The protein is Dihydroorotate dehydrogenase (quinone) of Natronomonas pharaonis (strain ATCC 35678 / DSM 2160 / CIP 103997 / JCM 8858 / NBRC 14720 / NCIMB 2260 / Gabara) (Halobacterium pharaonis).